The following is a 329-amino-acid chain: Beta-ketoacyl-[acyl-carrier-protein] synthase III (329 aa).

Active-site residues include C123 and H256. Positions 257-261 (QANIR) are ACP-binding. Residue N286 is part of the active site.

Belongs to the thiolase-like superfamily. FabH family. As to quaternary structure, homodimer.

It is found in the cytoplasm. It carries out the reaction malonyl-[ACP] + acetyl-CoA + H(+) = 3-oxobutanoyl-[ACP] + CO2 + CoA. It participates in lipid metabolism; fatty acid biosynthesis. Its function is as follows. Catalyzes the condensation reaction of fatty acid synthesis by the addition to an acyl acceptor of two carbons from malonyl-ACP. Catalyzes the first condensation reaction which initiates fatty acid synthesis and may therefore play a role in governing the total rate of fatty acid production. Possesses both acetoacetyl-ACP synthase and acetyl transacylase activities. Its substrate specificity determines the biosynthesis of branched-chain and/or straight-chain of fatty acids. This chain is Beta-ketoacyl-[acyl-carrier-protein] synthase III, found in Burkholderia vietnamiensis (strain G4 / LMG 22486) (Burkholderia cepacia (strain R1808)).